The primary structure comprises 1962 residues: MEFPFGSLETTNFRRFTPESLVEIEKRIAAKQAAKKAKGKHREQKDQEEKPRPQLDLKACNQPPKFYGELPAELVGEPLEDLDPFYSTHRTFMVLDKGRTISRFSATRALWLFSPFNLIRRTAIKVSVHSWFSLFITVTILVNCVGMTQTELPDRIEYVFTVIYTFEALIKILARGFCLNEFAYLRDPWDWLDFSVITLAYIGEATALRGISGLRTFRVLRALKTVSVIPGLKVIVGALIHSVRKLADVTILTVFCLSVFALVGLQLFKGNLKNKCVKNCAALNETGNYSSYGKQEWNFCHRDEDFYYNKPGTSDPLLCGNGSDAGHCPKGYLCLKTSDNPDFNYTSFDSFAWAFLSLFRLMTQDSWERLYQQTLRASGKMYMVFFVLVIFLGSFYLVNLILAVVTMAYEEQNQATIDEIEAKEKTFQETLEMPRKEQEVLAALGIDTASLHSCNGSPLPSKNASERMRRMKPRVSEGSTDDNKSPQSDPYNQRRMSFLGLTSGRRRASHGSVFHFRTPCLDTSFPDGVTDDGVFPGDRESHRGSLLLGGGTSQQGPLLRSPLPQPPNPGSGHGEDGHSTLPTGELAPGGIEVSAFDAGQKKTFLSAEYLNEPFRAQRAMSVVSIMTSVLEELEESERRCPPCLTSFAQKYLIWECCPTWVKLKTVLFGIVTDPFAELTTTLCIVVNTVFMAMEHHGMSSAFEAMLQIGNIVFTVFFTAEMVFKIIAFDPYYYFQKRWNIFDCIIVTVSLIELGAARKGSLSVLRTFRLLRVFKLAKSWPTLNTLIKIIGNSVGALGNLTIILAIIVFVFALVGKQLLGENYRDNRRNISAPNEEWPRWHMHDFFHSFLIVFRILCGEWIENMWACMEVGQKSICLILFLTVMVLGNLVVLNLFTALLLNSFSADNLATPDEDGEVNNLQVALARIQAFGHRTKKAICNFFTRPCLLPWPKAEPQLVVKLPLSSSKAENHIAANAAVGSPGGLSVSRGLRDDHSDFITNPNIWVSVPIAEGESDLDDLEEDGEEDSQSSQQEVILQGQEQLQVETCEGHTAPRSPGSGMSSEDLASYVDEKWKDEAVAQAPAEGGDDSSSSGGSTVDCLDPEEILRKIPELADDLEEPDDCFTEGCLRRCPCCKVDISKFPWTVGWQVRKTCYRIVEHSWFESFIIFMILLSSGSLAFEDYHLDQKPTVKALLEYTDRMFTFIFVLEMLLKWVAYGFKKYFTNAWCWLDFLIVNISLISLIAKILQYSDVASIKALRTLRALRPLRALSRFEGMRVVVDALVGAIPSIMNVLLVCLIFWLIFSTMGVNFFAGKFGRCINKTNEYFSLVPLSIVNNISDCKYQNHTGSFFWVNVKVNFDNVAMGYLALLQVATFKGWMDIMYAAVDARDVNLQPKWEDNVYMYLYFVIFIIFGGFFTLNLFVGVIIDNFNQQKKKLGGQDIFMTEEQKKYYNAMKKLGSKKPQKPIPRPLNKYQGFVFDIVTKQAFDIVIMVLICLNMITMMVETDEQSAEKTKILNKINQFFVAVFTGECVMKMFALRHYYFTNGWNVFDFIVVVLSIGSLVFSVILTSLENYFSPTLFRVIRLARIGRILRLIRAAKGIRTLLFALMMSLPALFNIGLLLFLVMFIYSIFGMASFPHVSWEAGIDDMFNFQTFANSMLCLFQITTSAGWDGLLSPILNTGPPYCDPNLPNSNGSRGNCGSPAVGILFFTTYIIISFLIVVNMYIAVILENFNVATQESSEPLSEDDFDMFYETWEKFDPEATQFITFSALSDFADTLSGPLRIPKPNQNILIQMDLPLVPGDKIHCLDILFAFTKNVLGESGELDSLKANIEEKFMATNVSKASYEPIATTLRWKQEDISATVIQKAYRSYVLHRSMTISNPPAVPRAEEAVPPPDEAFVEFMVNENCALPDKSETASAASFPPSYDSVTRGLSDQINMSTSSSMQNEDEGTSKKVTAPGP.

The Cytoplasmic portion of the chain corresponds to 1–125 (MEFPFGSLET…FNLIRRTAIK (125 aa)). The disordered stretch occupies residues 32-56 (QAAKKAKGKHREQKDQEEKPRPQLD). Residues 33–42 (AAKKAKGKHR) are compositionally biased toward basic residues. Residues 43-55 (EQKDQEEKPRPQL) are compositionally biased toward basic and acidic residues. The stretch at 116-414 (FNLIRRTAIK…VTMAYEEQNQ (299 aa)) is one I repeat. Residues 126–149 (VSVHSWFSLFITVTILVNCVGMTQ) form a helical membrane-spanning segment. Over 150-154 (TELPD) the chain is Extracellular. A helical membrane pass occupies residues 155-174 (RIEYVFTVIYTFEALIKILA). At 175–187 (RGFCLNEFAYLRD) the chain is on the cytoplasmic side. A helical membrane pass occupies residues 188-206 (PWDWLDFSVITLAYIGEAT). Topologically, residues 207-212 (ALRGIS) are extracellular. Residues 213 to 232 (GLRTFRVLRALKTVSVIPGL) form a helical; Voltage-sensor membrane-spanning segment. Residues 233–248 (KVIVGALIHSVRKLAD) lie on the Cytoplasmic side of the membrane. A helical membrane pass occupies residues 249–272 (VTILTVFCLSVFALVGLQLFKGNL). The Extracellular portion of the chain corresponds to 273 to 350 (KNKCVKNCAA…PDFNYTSFDS (78 aa)). C276 and C328 are disulfide-bonded. Residues N284, N288, N321, and N344 are each glycosylated (N-linked (GlcNAc...) asparagine). Positions 351–375 (FAWAFLSLFRLMTQDSWERLYQQTL) form an intramembrane region, pore-forming. Over 376 to 382 (RASGKMY) the chain is Extracellular. A helical membrane pass occupies residues 383-408 (MVFFVLVIFLGSFYLVNLILAVVTMA). Residues 409–668 (YEEQNQATID…TWVKLKTVLF (260 aa)) are Cytoplasmic-facing. Residues S450, S453, S476, and S488 each carry the phosphoserine modification. The span at 452–463 (HSCNGSPLPSKN) shows a compositional bias: polar residues. 2 disordered regions span residues 452–493 (HSCN…PYNQ) and 521–586 (LDTS…TGEL). Residues S621 and S624 each carry the phosphoserine modification. One copy of the II repeat lies at 656–920 (CCPTWVKLKT…DEDGEVNNLQ (265 aa)). A helical transmembrane segment spans residues 669–693 (GIVTDPFAELTTTLCIVVNTVFMAM). Residues 694 to 704 (EHHGMSSAFEA) lie on the Extracellular side of the membrane. A helical membrane pass occupies residues 705-728 (MLQIGNIVFTVFFTAEMVFKIIAF). The Cytoplasmic portion of the chain corresponds to 729–736 (DPYYYFQK). A helical transmembrane segment spans residues 737-756 (RWNIFDCIIVTVSLIELGAA). Residues 757-762 (RKGSLS) are Extracellular-facing. A helical; Voltage-sensor transmembrane segment spans residues 763-782 (VLRTFRLLRVFKLAKSWPTL). The Cytoplasmic portion of the chain corresponds to 783–798 (NTLIKIIGNSVGALGN). Residues 799-819 (LTIILAIIVFVFALVGKQLLG) form a helical membrane-spanning segment. Over 820-843 (ENYRDNRRNISAPNEEWPRWHMHD) the chain is Extracellular. A glycan (N-linked (GlcNAc...) asparagine) is linked at N828. Positions 844-864 (FFHSFLIVFRILCGEWIENMW) form an intramembrane region, pore-forming. The Extracellular segment spans residues 865 to 873 (ACMEVGQKS). The cysteines at positions 866 and 875 are disulfide-linked. A helical transmembrane segment spans residues 874–899 (ICLILFLTVMVLGNLVVLNLFTALLL). At 900-1154 (NSFSADNLAT…GWQVRKTCYR (255 aa)) the chain is on the cytoplasmic side. Acidic residues predominate over residues 1015-1026 (LDDLEEDGEEDS). The segment at 1015–1035 (LDDLEEDGEEDSQSSQQEVIL) is disordered. The stretch at 1147–1456 (QVRKTCYRIV…KKYYNAMKKL (310 aa)) is one III repeat. A helical transmembrane segment spans residues 1155–1178 (IVEHSWFESFIIFMILLSSGSLAF). At 1179–1191 (EDYHLDQKPTVKA) the chain is on the extracellular side. The helical transmembrane segment at 1192–1217 (LLEYTDRMFTFIFVLEMLLKWVAYGF) threads the bilayer. Residues 1218-1223 (KKYFTN) are Cytoplasmic-facing. A helical membrane pass occupies residues 1224-1245 (AWCWLDFLIVNISLISLIAKIL). Over 1246 to 1249 (QYSD) the chain is Extracellular. The chain crosses the membrane as a helical; Voltage-sensor span at residues 1250-1271 (VASIKALRTLRALRPLRALSRF). Residues 1272-1290 (EGMRVVVDALVGAIPSIMN) lie on the Cytoplasmic side of the membrane. Residues 1291 to 1318 (VLLVCLIFWLIFSTMGVNFFAGKFGRCI) traverse the membrane as a helical segment. Residues N1319, N1335, and N1343 are each glycosylated (N-linked (GlcNAc...) asparagine). At 1319–1360 (NKTNEYFSLVPLSIVNNISDCKYQNHTGSFFWVNVKVNFDNV) the chain is on the extracellular side. An intramembrane region (pore-forming) is located at residues 1361 to 1382 (AMGYLALLQVATFKGWMDIMYA). Over 1383–1398 (AVDARDVNLQPKWEDN) the chain is Extracellular. A helical membrane pass occupies residues 1399 to 1425 (VYMYLYFVIFIIFGGFFTLNLFVGVII). Over 1426-1478 (DNFNQQKKKLGGQDIFMTEEQKKYYNAMKKLGSKKPQKPIPRPLNKYQGFVFD) the chain is Cytoplasmic. Position 1458 is a phosphoserine; by PKC (S1458). One copy of the IV repeat lies at 1465–1764 (IPRPLNKYQG…WEKFDPEATQ (300 aa)). Residues 1479 to 1502 (IVTKQAFDIVIMVLICLNMITMMV) traverse the membrane as a helical segment. Residues 1503-1513 (ETDEQSAEKTK) lie on the Extracellular side of the membrane. Residues 1514–1537 (ILNKINQFFVAVFTGECVMKMFAL) traverse the membrane as a helical segment. At 1538-1543 (RHYYFT) the chain is on the cytoplasmic side. Residues 1544 to 1567 (NGWNVFDFIVVVLSIGSLVFSVIL) form a helical membrane-spanning segment. The Extracellular segment spans residues 1568–1579 (TSLENYFSPTLF). A helical; Voltage-sensor membrane pass occupies residues 1580-1601 (RVIRLARIGRILRLIRAAKGIR). Residues 1602 to 1616 (TLLFALMMSLPALFN) lie on the Cytoplasmic side of the membrane. Residues 1617–1639 (IGLLLFLVMFIYSIFGMASFPHV) traverse the membrane as a helical segment. Residues 1640 to 1653 (SWEAGIDDMFNFQT) lie on the Extracellular side of the membrane. Residues 1654 to 1676 (FANSMLCLFQITTSAGWDGLLSP) constitute an intramembrane region (pore-forming). The Extracellular portion of the chain corresponds to 1677–1704 (ILNTGPPYCDPNLPNSNGSRGNCGSPAV). N1693 carries N-linked (GlcNAc...) asparagine glycosylation. A helical membrane pass occupies residues 1705–1729 (GILFFTTYIIISFLIVVNMYIAVIL). Residues 1730-1962 (ENFNVATQES…TSKKVTAPGP (233 aa)) are Cytoplasmic-facing. The 30-residue stretch at 1858–1887 (EDISATVIQKAYRSYVLHRSMTISNPPAVP) folds into the IQ domain. Positions 1914-1962 (KSETASAASFPPSYDSVTRGLSDQINMSTSSSMQNEDEGTSKKVTAPGP) are disordered. Residues 1928–1947 (DSVTRGLSDQINMSTSSSMQ) are compositionally biased toward polar residues.

Belongs to the sodium channel (TC 1.A.1.10) family. Nav1.8/SCN10A subfamily. In terms of assembly, the channel consists of an ion conducting pore forming alpha-subunit regulated by one or more associated auxiliary subunits SCN1B, SCN2B and SCN3B; electrophysiological properties may vary depending on the type of the associated beta subunits. Found in a number of complexes with PRX, DYNLT1 and PDZD2. Interacts with proteins such as FSTL1, PRX, DYNLT1, PDZD2, S100A10 and many others. Interacts with NEDD4 and NEDD4L. In terms of processing, ubiquitinated by NEDD4L; which promotes its endocytosis. Phosphorylation at Ser-1458 by PKC in a highly conserved cytoplasmic loop slows inactivation of the sodium channel and reduces peak sodium currents. Post-translationally, lacks the cysteine which covalently binds the conotoxin GVIIJ. This cysteine (position 825) is speculated in other sodium channel subunits alpha to be implied in covalent binding with the sodium channel subunit beta-2 or beta-4. Expressed in nodose ganglia, but not in cortex, hippocampus, cerebellum, liver, heart and skeletal muscle.

The protein localises to the cell membrane. It carries out the reaction Na(+)(in) = Na(+)(out). In terms of biological role, tetrodotoxin-resistant channel that mediates the voltage-dependent sodium ion permeability of excitable membranes. Assuming opened or closed conformations in response to the voltage difference across the membrane, the protein forms a sodium-selective channel through which sodium ions may pass in accordance with their electrochemical gradient. Plays a role in neuropathic pain mechanisms. In Canis lupus familiaris (Dog), this protein is Sodium channel protein type 10 subunit alpha (SCN10A).